A 394-amino-acid chain; its full sequence is Stabilizer of axonemal microtubules 2 (394 aa).

6 mn regions span residues 110–122 (STTF…PQEI), 144–158 (DTSH…QLEV), 244–256 (NSTS…PYQA), 278–292 (KSTT…EICR), 312–324 (LSTF…PHEL), and 346–360 (VTMY…KQEI).

Belongs to the FAM154 family.

This Mus musculus (Mouse) protein is Stabilizer of axonemal microtubules 2 (Saxo2).